The sequence spans 93 residues: Alpha-defensin 1 (93 aa).

The first 19 residues, 1-19, serve as a signal peptide directing secretion; that stretch reads MKKLVLLFALVLLGFQVQA. The propeptide occupies 20–58; the sequence is DSIQNTDEETKTEEQPGEEDQAVSVSFGDPEGTSLQEES. Positions 24-54 are disordered; that stretch reads NTDEETKTEEQPGEEDQAVSVSFGDPEGTSL. Disulfide bonds link Cys64-Cys92, Cys66-Cys81, and Cys71-Cys91.

It belongs to the alpha-defensin family. In terms of tissue distribution, paneth cells of the small bowel.

The protein resides in the secreted. Its function is as follows. Probably contributes to the antimicrobial barrier function of the small bowel mucosa. Has antibacterial activity against attenuated mutants of S.typhimurium. This Mus musculus (Mouse) protein is Alpha-defensin 1 (Defa1).